We begin with the raw amino-acid sequence, 395 residues long: 1-deoxy-D-xylulose 5-phosphate reductoisomerase (395 aa).

NADPH-binding residues include threonine 10, glycine 11, serine 12, isoleucine 13, asparagine 38, and asparagine 122. Lysine 123 lines the 1-deoxy-D-xylulose 5-phosphate pocket. Glutamate 124 contributes to the NADPH binding site. Aspartate 148 serves as a coordination point for Mn(2+). The 1-deoxy-D-xylulose 5-phosphate site is built by serine 149, glutamate 150, serine 178, and histidine 200. Glutamate 150 lines the Mn(2+) pocket. Position 206 (glycine 206) interacts with NADPH. Residues serine 213, asparagine 218, lysine 219, and glutamate 222 each contribute to the 1-deoxy-D-xylulose 5-phosphate site. Glutamate 222 lines the Mn(2+) pocket.

It belongs to the DXR family. The cofactor is Mg(2+). Requires Mn(2+) as cofactor.

It catalyses the reaction 2-C-methyl-D-erythritol 4-phosphate + NADP(+) = 1-deoxy-D-xylulose 5-phosphate + NADPH + H(+). Its pathway is isoprenoid biosynthesis; isopentenyl diphosphate biosynthesis via DXP pathway; isopentenyl diphosphate from 1-deoxy-D-xylulose 5-phosphate: step 1/6. Functionally, catalyzes the NADPH-dependent rearrangement and reduction of 1-deoxy-D-xylulose-5-phosphate (DXP) to 2-C-methyl-D-erythritol 4-phosphate (MEP). The chain is 1-deoxy-D-xylulose 5-phosphate reductoisomerase from Elusimicrobium minutum (strain Pei191).